Reading from the N-terminus, the 287-residue chain is Immunoglobulin alpha Fc receptor (287 aa).

Residues Met1–Ala21 form the signal peptide. Residues Gln22–Asn227 are Extracellular-facing. 2 Ig-like C2-type domains span residues Asp42–Tyr107 and Gly139–Ser200. The cysteines at positions 49 and 100 are disulfide-linked. 5 N-linked (GlcNAc...) asparagine glycosylation sites follow: Asn65, Asn79, Asn141, Asn177, and Asn186. Cys146 and Cys193 are disulfide-bonded. The helical transmembrane segment at Leu228–Val246 threads the bilayer. The Cytoplasmic segment spans residues Glu247–Lys287.

In terms of assembly, associates with the Fc epsilon RI gamma 2 receptor inducing tyrosine phosphorylation of gamma 2. As to quaternary structure, (Microbial infection) Interacts with Staphylococcus aureus protein SSL11. As to expression, isoform A.1, isoform A.2 and isoform A.3 are differentially expressed between blood and mucosal myeloid cells. Isoform A.1, isoform A.2 and isoform A.3 are expressed in monocytes. Isoform A.1 and isoform A.2 are expressed in alveolar macrophages; however only one isoform is expressed at alveolar macrophages surfaces.

It localises to the cell membrane. Its subcellular location is the secreted. In terms of biological role, binds to the Fc region of immunoglobulins alpha. Mediates several functions including cytokine production. The protein is Immunoglobulin alpha Fc receptor (FCAR) of Homo sapiens (Human).